A 971-amino-acid chain; its full sequence is Piwi-like protein 2 (971 aa).

The residue at position 45 (Arg-45) is a Symmetric dimethylarginine. Arg-74 bears the Omega-N-methylarginine; by PRMT5; alternate mark. Arg-74 bears the Symmetric dimethylarginine; by PRMT5; alternate mark. Arg-83 is modified (omega-N-methylarginine; alternate). Symmetric dimethylarginine; alternate occurs at positions 83 and 95. At Arg-95 the chain carries Omega-N-methylarginine; by PRMT5; alternate. The residue at position 100 (Arg-100) is a Symmetric dimethylarginine; by PRMT5; alternate. Arg-100 is subject to Omega-N-methylarginine; alternate. The interval 102–124 (LSANMVRKDREEPRSSLPDPSVL) is disordered. Symmetric dimethylarginine is present on residues Arg-144 and Arg-156. Residues 159 to 200 (SSIGRGMDKPPSAFGLTARDPPRLPQPPALSPTSLHSADPPP) form a disordered region. Arg-163 bears the Symmetric dimethylarginine; by PRMT5 mark. Positions 387–500 (SVLDVMHAIY…LLPELSFMTG (114 aa)) constitute a PAZ domain. A Symmetric dimethylarginine; by PRMT5 modification is found at Arg-549. The region spanning 666 to 957 (MVVCIIMGTR…LAFLSGQILH (292 aa)) is the Piwi domain. Catalysis depends on residues Asp-743, Glu-781, Asp-813, and His-946.

This sequence belongs to the argonaute family. Piwi subfamily. In terms of assembly, interacts with DDX4, MAEL, EIF3A, EIF4E, EIF4G, PRMT5 and WDR77. Associates with EIF4E- and EIF4G-containing m7G cap-binding complexes. Interacts (when methylated on arginine residues) with TDRD1 and TDRKH/TDRD2. Interacts with TDRD12. Component of the PET complex, at least composed of EXD1, PIWIL2, TDRD12 and piRNAs. Interacts with MOV10L1. Interacts with GPAT2. Interacts with Tex19.1 and, probably, Tex19.2. Interacts (via PIWI domain) with BMAL1 and CLOCK. Interacts with GSK3B. Interacts with TEX15. The cofactor is Mg(2+). In terms of processing, arginine methylation by PRMT5 is required for the interaction with Tudor domain-containing protein TDRD1 and subsequent localization to the meiotic nuage, also named P granule. As to expression, expressed in adult testis, specifically in spermatocytes and in spermatogonia. Only detected in primordial germ cells of both sexes. Widely expressed in tumors. Also present at early stages of oocyte growth. Present in the mitotic spermatogonia. Not detected in the first stages of meiosis (preleptotene and leptotene). Detected at the late zygotene stage and increases throughout pachytene, declining from this stage onward until expression stops at the early round spermatid stage (at protein level).

Its subcellular location is the cytoplasm. Endoribonuclease that plays a central role during spermatogenesis by repressing transposable elements and preventing their mobilization, which is essential for the germline integrity. Plays an essential role in meiotic differentiation of spermatocytes, germ cell differentiation and in self-renewal of spermatogonial stem cells. Its presence in oocytes suggests that it may participate in similar functions during oogenesis in females. Acts via the piRNA metabolic process, which mediates the repression of transposable elements during meiosis by forming complexes composed of piRNAs and Piwi proteins and govern the methylation and subsequent repression of transposons. During piRNA biosynthesis, plays a key role in the piRNA amplification loop, also named ping-pong amplification cycle, by acting as a 'slicer-competent' piRNA endoribonuclease that cleaves primary piRNAs, which are then loaded onto 'slicer-incompetent' PIWIL4. PIWIL2 slicing produces a pre-miRNA intermediate, which is then processed in mature piRNAs, and as well as a 16 nucleotide by-product that is degraded. Required for PIWIL4/MIWI2 nuclear localization and association with secondary piRNAs antisense. Besides their function in transposable elements repression, piRNAs are probably involved in other processes during meiosis such as translation regulation. Indirectly modulates expression of genes such as PDGFRB, SLC2A1, ITGA6, GJA7, THY1, CD9 and STRA8. Represses circadian rhythms by promoting the stability and activity of core clock components BMAL1 and CLOCK by inhibiting GSK3B-mediated phosphorylation and ubiquitination-dependent degradation of these proteins. The protein is Piwi-like protein 2 of Mus musculus (Mouse).